Reading from the N-terminus, the 1425-residue chain is Zinc finger FYVE domain-containing protein 9 (1425 aa).

Disordered regions lie at residues 201–255 (ESTE…IGRD) and 291–352 (EDLT…SGRN). Residues 202–225 (STEKDMNSEKQMDPLNRPKTEGRS) show a composition bias toward basic and acidic residues. Polar residues-rich tracts occupy residues 230-245 (CPTS…SPSQ) and 296-312 (KISS…SFSH). Phosphoserine occurs at positions 306 and 668. Residues 699-758 (DSQAPNCMKCEARFTFTKRRHHCRACGKVFCASCCSLKCKLLYMDRKEARVCVICHSVLM) form an FYVE-type zinc finger. Residues Cys-705, Cys-708, Cys-721, Cys-724, Cys-729, Cys-732, Cys-750, and Cys-753 each contribute to the Zn(2+) site. The tract at residues 767–823 (MSASSQSPNPNNPAEYCSTIPPLQQAQASGALSSPPPTVMVPVGVLKHPGAEVAQPR) is SBD.

In terms of assembly, interacts (via the SBD region) with SMAD2; the interaction recruits SMAD2 to the TGF-beta receptor and is disrupted by phosphorylation of SMAD2 upon TGF-beta receptor activation. Interacts with SMAD3. Interacts with TGFBR1 and TGFBR2; the interaction recruits SMAD2 to the TGF-beta receptor. Interacts with PML. In terms of tissue distribution, ubiquitous. In the brain found primarily in the cerebrovascular smooth muscle cells and reactive astrocytes.

The protein localises to the cytoplasm. It is found in the early endosome membrane. Its function is as follows. Early endosomal protein that functions to recruit SMAD2/SMAD3 to intracellular membranes and to the TGF-beta receptor. Plays a significant role in TGF-mediated signaling by regulating the subcellular location of SMAD2 and SMAD3 and modulating the transcriptional activity of the SMAD3/SMAD4 complex. Possibly associated with TGF-beta receptor internalization. This Homo sapiens (Human) protein is Zinc finger FYVE domain-containing protein 9 (ZFYVE9).